A 246-amino-acid chain; its full sequence is Ubiquitin-conjugating enzyme E2 6 (246 aa).

The Cytoplasmic segment spans residues 1–224 (MATKQAQKRL…LEKQHNDKPN (224 aa)). In terms of domain architecture, UBC core spans 5–154 (QAQKRLTKEY…FNSTRFKLVF (150 aa)). The active-site Glycyl thioester intermediate is the Cys87. A helical membrane pass occupies residues 225-245 (GSSSMFYIGVALFLFLVGLFM).

It belongs to the ubiquitin-conjugating enzyme family.

The protein resides in the endoplasmic reticulum membrane. The catalysed reaction is S-ubiquitinyl-[E1 ubiquitin-activating enzyme]-L-cysteine + [E2 ubiquitin-conjugating enzyme]-L-cysteine = [E1 ubiquitin-activating enzyme]-L-cysteine + S-ubiquitinyl-[E2 ubiquitin-conjugating enzyme]-L-cysteine.. The protein operates within protein modification; protein ubiquitination. Catalyzes the covalent attachment of ubiquitin to other proteins. Functions in degradation of misfolded or regulated proteins localized in the endoplasmic reticulum (ER) lumen or membrane via the ubiquitin-proteasome system. Cognate E2 conjugating enzyme for the DOA10 ubiquitin ligase complex, which is part of the ERAD-C pathway responsible for the rapid degradation of membrane proteins with misfolded cytoplasmic domains. This is Ubiquitin-conjugating enzyme E2 6 (UBC6) from Candida glabrata (strain ATCC 2001 / BCRC 20586 / JCM 3761 / NBRC 0622 / NRRL Y-65 / CBS 138) (Yeast).